The following is a 200-amino-acid chain: uncharacterized protein (200 aa).

Positions 1-24 are cleaved as a signal peptide; that stretch reads MAIDKLPLLLFLSILLCLNRPVLS. N44, N72, N99, N124, and N135 each carry an N-linked (GlcNAc...) asparagine glycan. Residue S174 is the site of GPI-anchor amidated serine attachment. The propeptide at 175-200 is removed in mature form; sequence NGFTFGIGLVSYLVIFMYSSFCFFLF.

It belongs to the UPF0277 family.

Its subcellular location is the cell membrane. This is an uncharacterized protein from Arabidopsis thaliana (Mouse-ear cress).